The sequence spans 844 residues: Neuronal PAS domain-containing protein 4B (844 aa).

Residues 61-74 (KMYRSTKGASKARR) are basic motif; degenerate. In terms of domain architecture, bHLH spans 61-114 (KMYRSTKGASKARRDQINAEIRSLKELLPISDADKARLSYLHIMSLACIYTRKS). The tract at residues 75–114 (DQINAEIRSLKELLPISDADKARLSYLHIMSLACIYTRKS) is helix-loop-helix motif. 2 PAS domains span residues 132–190 (SLPE…PVDH) and 294–343 (DMRI…LHNG). A compositionally biased stretch (polar residues) spans 410 to 422 (SRQSSDPLSSPDQ). 4 disordered regions span residues 410–432 (SRQS…SGLS), 444–479 (GRSS…GGGH), 702–725 (PLPN…SYSQ), and 757–784 (TEGG…EAPA). A compositionally biased stretch (pro residues) spans 704–716 (PNLPSPSPVPPSP).

In terms of assembly, efficient DNA binding requires dimerization with another bHLH protein.

It localises to the nucleus. Functionally, transcription factor expressed in neurons of the brain that regulates the excitatory-inhibitory balance within neural circuits and is required for contextual memory in the hippocampus. Plays a key role in the structural and functional plasticity of neurons. Acts as an early-response transcription factor in both excitatory and inhibitory neurons, where it induces distinct but overlapping sets of late-response genes in these two types of neurons, allowing the synapses that form on inhibitory and excitatory neurons to be modified by neuronal activity in a manner specific to their function within a circuit, thereby facilitating appropriate circuit responses to sensory experience. This Danio rerio (Zebrafish) protein is Neuronal PAS domain-containing protein 4B (npas4b).